A 427-amino-acid chain; its full sequence is GTPase Obg (427 aa).

An Obg domain is found at 1–158 (MFVDIAKIYV…LWVILELKVL (158 aa)). The OBG-type G domain maps to 159–330 (ADVGLIGYPN…VLKRAYELLK (172 aa)). GTP contacts are provided by residues 165 to 172 (GYPNVGKS), 190 to 194 (FTTKY), 212 to 215 (DIPG), 282 to 285 (NKMD), and 311 to 313 (SAA). Residues Ser-172 and Thr-192 each contribute to the Mg(2+) site. The OCT domain occupies 347–427 (FVYYKKKDVK…ILDVEFEYYE (81 aa)).

This sequence belongs to the TRAFAC class OBG-HflX-like GTPase superfamily. OBG GTPase family. Monomer. Mg(2+) serves as cofactor.

It is found in the cytoplasm. In terms of biological role, an essential GTPase which binds GTP, GDP and possibly (p)ppGpp with moderate affinity, with high nucleotide exchange rates and a fairly low GTP hydrolysis rate. Plays a role in control of the cell cycle, stress response, ribosome biogenesis and in those bacteria that undergo differentiation, in morphogenesis control. In Caldicellulosiruptor bescii (strain ATCC BAA-1888 / DSM 6725 / KCTC 15123 / Z-1320) (Anaerocellum thermophilum), this protein is GTPase Obg.